A 217-amino-acid chain; its full sequence is Deoxyribose-phosphate aldolase 1 (217 aa).

Catalysis depends on aspartate 89, which acts as the Proton donor/acceptor. Lysine 151 functions as the Schiff-base intermediate with acetaldehyde in the catalytic mechanism. Residue lysine 180 is the Proton donor/acceptor of the active site.

This sequence belongs to the DeoC/FbaB aldolase family. DeoC type 1 subfamily.

The protein resides in the cytoplasm. It carries out the reaction 2-deoxy-D-ribose 5-phosphate = D-glyceraldehyde 3-phosphate + acetaldehyde. The protein operates within carbohydrate degradation; 2-deoxy-D-ribose 1-phosphate degradation; D-glyceraldehyde 3-phosphate and acetaldehyde from 2-deoxy-alpha-D-ribose 1-phosphate: step 2/2. Functionally, catalyzes a reversible aldol reaction between acetaldehyde and D-glyceraldehyde 3-phosphate to generate 2-deoxy-D-ribose 5-phosphate. This chain is Deoxyribose-phosphate aldolase 1, found in Cutibacterium acnes (strain DSM 16379 / KPA171202) (Propionibacterium acnes).